Here is a 386-residue protein sequence, read N- to C-terminus: Succinate--CoA ligase [ADP-forming] subunit beta (386 aa).

Residues Lys-9–Glu-244 form the ATP-grasp domain. ATP-binding positions include Lys-46, Gly-53–Gly-55, Glu-99, Cys-102, and Glu-107. Residues Asn-199 and Asp-213 each contribute to the Mg(2+) site. Substrate is bound by residues Asn-264 and Gly-321–Met-323.

The protein belongs to the succinate/malate CoA ligase beta subunit family. As to quaternary structure, heterotetramer of two alpha and two beta subunits. It depends on Mg(2+) as a cofactor.

It catalyses the reaction succinate + ATP + CoA = succinyl-CoA + ADP + phosphate. The catalysed reaction is GTP + succinate + CoA = succinyl-CoA + GDP + phosphate. The protein operates within carbohydrate metabolism; tricarboxylic acid cycle; succinate from succinyl-CoA (ligase route): step 1/1. Its function is as follows. Succinyl-CoA synthetase functions in the citric acid cycle (TCA), coupling the hydrolysis of succinyl-CoA to the synthesis of either ATP or GTP and thus represents the only step of substrate-level phosphorylation in the TCA. The beta subunit provides nucleotide specificity of the enzyme and binds the substrate succinate, while the binding sites for coenzyme A and phosphate are found in the alpha subunit. The sequence is that of Succinate--CoA ligase [ADP-forming] subunit beta from Geobacillus kaustophilus (strain HTA426).